A 171-amino-acid chain; its full sequence is UPF0312 protein SAB2563 (171 aa).

It belongs to the UPF0312 family.

The protein is UPF0312 protein SAB2563 of Staphylococcus aureus (strain bovine RF122 / ET3-1).